The primary structure comprises 155 residues: Endoribonuclease YbeY (155 aa).

Zn(2+) contacts are provided by His-114, His-118, and His-124.

It belongs to the endoribonuclease YbeY family. Requires Zn(2+) as cofactor.

It is found in the cytoplasm. Functionally, single strand-specific metallo-endoribonuclease involved in late-stage 70S ribosome quality control and in maturation of the 3' terminus of the 16S rRNA. The chain is Endoribonuclease YbeY from Escherichia coli O81 (strain ED1a).